Reading from the N-terminus, the 638-residue chain is Threonine--tRNA ligase 2 (638 aa).

A TGS domain is found at 1-64 (MSKHVHIQLP…EEDAELSIVT (64 aa)). Residues 245-535 (DHRKLGKQLG…LIEHYGGAFP (291 aa)) are catalytic. Positions 336, 387, and 512 each coordinate Zn(2+).

It belongs to the class-II aminoacyl-tRNA synthetase family. In terms of assembly, homodimer. The cofactor is Zn(2+).

It localises to the cytoplasm. It carries out the reaction tRNA(Thr) + L-threonine + ATP = L-threonyl-tRNA(Thr) + AMP + diphosphate + H(+). Functionally, catalyzes the attachment of threonine to tRNA(Thr) in a two-step reaction: L-threonine is first activated by ATP to form Thr-AMP and then transferred to the acceptor end of tRNA(Thr). Also edits incorrectly charged L-seryl-tRNA(Thr). This is Threonine--tRNA ligase 2 (thrZ) from Bacillus subtilis (strain 168).